The chain runs to 331 residues: HPr kinase/phosphorylase (331 aa).

Residues histidine 153 and lysine 174 contribute to the active site. 168–175 provides a ligand contact to ATP; it reads GKSGLGKS. Serine 175 provides a ligand contact to Mg(2+). Catalysis depends on aspartate 192, which acts as the Proton acceptor; for phosphorylation activity. Proton donor; for dephosphorylation activity. Positions 217–226 are important for the catalytic mechanism of both phosphorylation and dephosphorylation; sequence MEIRGLGVVD. Residue glutamate 218 participates in Mg(2+) binding. Arginine 259 is an active-site residue. Positions 280-285 are important for the catalytic mechanism of dephosphorylation; that stretch reads PIFPGK.

This sequence belongs to the HPrK/P family. Homohexamer. Mg(2+) is required as a cofactor.

It carries out the reaction [HPr protein]-L-serine + ATP = [HPr protein]-O-phospho-L-serine + ADP + H(+). The catalysed reaction is [HPr protein]-O-phospho-L-serine + phosphate + H(+) = [HPr protein]-L-serine + diphosphate. Catalyzes the ATP- as well as the pyrophosphate-dependent phosphorylation of a specific serine residue in HPr, a phosphocarrier protein of the phosphoenolpyruvate-dependent sugar phosphotransferase system (PTS). HprK/P also catalyzes the pyrophosphate-producing, inorganic phosphate-dependent dephosphorylation (phosphorolysis) of seryl-phosphorylated HPr (P-Ser-HPr). The sequence is that of HPr kinase/phosphorylase from Pelodictyon phaeoclathratiforme (strain DSM 5477 / BU-1).